The sequence spans 552 residues: CTP synthase (552 aa).

An amidoligase domain region spans residues 1 to 265 (MTKFVFVTGG…DRIVCEKLAL (265 aa)). Ser13 lines the CTP pocket. Ser13 contributes to the UTP binding site. ATP is bound by residues 14–19 (SLGKGI) and Asp71. Asp71 and Glu139 together coordinate Mg(2+). Residues 146 to 148 (DIE), 186 to 191 (KTKPTQ), and Lys222 contribute to the CTP site. Residues 186-191 (KTKPTQ) and Lys222 contribute to the UTP site. One can recognise a Glutamine amidotransferase type-1 domain in the interval 290–545 (TIGMVGKYVD…IKAALAHKQA (256 aa)). Gly351 contacts L-glutamine. Residue Cys378 is the Nucleophile; for glutamine hydrolysis of the active site. Residues 379–382 (LGMQ), Glu402, and Arg468 each bind L-glutamine. Active-site residues include His518 and Glu520.

Belongs to the CTP synthase family. As to quaternary structure, homotetramer.

It carries out the reaction UTP + L-glutamine + ATP + H2O = CTP + L-glutamate + ADP + phosphate + 2 H(+). The catalysed reaction is L-glutamine + H2O = L-glutamate + NH4(+). It catalyses the reaction UTP + NH4(+) + ATP = CTP + ADP + phosphate + 2 H(+). It functions in the pathway pyrimidine metabolism; CTP biosynthesis via de novo pathway; CTP from UDP: step 2/2. Its activity is regulated as follows. Allosterically activated by GTP, when glutamine is the substrate; GTP has no effect on the reaction when ammonia is the substrate. The allosteric effector GTP functions by stabilizing the protein conformation that binds the tetrahedral intermediate(s) formed during glutamine hydrolysis. Inhibited by the product CTP, via allosteric rather than competitive inhibition. Catalyzes the ATP-dependent amination of UTP to CTP with either L-glutamine or ammonia as the source of nitrogen. Regulates intracellular CTP levels through interactions with the four ribonucleotide triphosphates. This chain is CTP synthase, found in Herminiimonas arsenicoxydans.